We begin with the raw amino-acid sequence, 191 residues long: Ciliary microtubule-associated protein 3 (191 aa).

As to quaternary structure, interacts with proteins involved in ciliary transport, including ARL13B, CETN1, KIF3A, RAB6A, RAB8A, TUBB1 and TUBG1. Interacts with AURKA.

The protein resides in the cytoplasmic vesicle. The protein localises to the golgi apparatus. Its subcellular location is the trans-Golgi network. It is found in the cytoplasm. In terms of biological role, during primary cilia disassembly, involved in cilia disassembly. Required specifically to control cilia retraction as well as the liberation and duplication of the basal body/centrosome. May act by stimulating AURKA activity at the basal body in a cell cycle-dependent manner. This Homo sapiens (Human) protein is Ciliary microtubule-associated protein 3.